The sequence spans 181 residues: Cytochrome c-type biogenesis protein CcmE (181 aa).

Topologically, residues 1–8 (MNPRRKSR) are cytoplasmic. A helical; Signal-anchor for type II membrane protein transmembrane segment spans residues 9-29 (LKVVVLIMFSVAVAAGLTLYA). Over 30–181 (LSQNIDLFYT…TFNTLQGESK (152 aa)) the chain is Periplasmic. His-131 and Tyr-135 together coordinate heme.

It belongs to the CcmE/CycJ family.

It is found in the cell inner membrane. Its function is as follows. Heme chaperone required for the biogenesis of c-type cytochromes. Transiently binds heme delivered by CcmC and transfers the heme to apo-cytochromes in a process facilitated by CcmF and CcmH. The sequence is that of Cytochrome c-type biogenesis protein CcmE from Haemophilus ducreyi (strain 35000HP / ATCC 700724).